A 681-amino-acid polypeptide reads, in one-letter code: Propionyl-CoA carboxylase alpha chain (681 aa).

Residues 1-466 enclose the Biotin carboxylation domain; sequence MFNKILIANR…TTAFIAEEYP (466 aa). Residues K116, 148–209, E200, and N235 each bind ATP; that span reads SNQI…PRHI. The region spanning 120 to 317 is the ATP-grasp domain; it reads KKIAQEANVS…LVEQMIRVAA (198 aa). Positions 275, 288, and 290 each coordinate Mg(2+). E275, E288, and N290 together coordinate Mn(2+). E288 is a catalytic residue. Position 348 (F348) interacts with biotin. The Biotinyl-binding domain occupies 602 to 681; the sequence is LMPEKLPPDT…AVDDVIMEFE (80 aa). An N6-biotinyllysine modification is found at K647.

In terms of assembly, the holoenzyme is a dodecamer composed of 6 PccA/alpha subunits and 6 PccB/beta subunits. Mg(2+) is required as a cofactor. Requires Mn(2+) as cofactor. Biotin serves as cofactor. Post-translationally, the biotin cofactor is covalently attached to the C-terminal biotinyl-binding domain and is required for the catalytic activity.

The catalysed reaction is propanoyl-CoA + hydrogencarbonate + ATP = (S)-methylmalonyl-CoA + ADP + phosphate + H(+). It functions in the pathway metabolic intermediate metabolism; propanoyl-CoA degradation; succinyl-CoA from propanoyl-CoA: step 1/3. In terms of biological role, this is one of the 2 subunits of the biotin-dependent propionyl-CoA carboxylase (PCC), the enzyme catalyzing the carboxylation of propionyl-CoA/propanoyl-CoA to D-methylmalonyl-CoA/(S)-methylmalonyl-CoA. Within the holoenzyme, the alpha subunit catalyzes the ATP-dependent carboxylation of the biotin carried by the biotin carboxyl carrier (BCC) domain, while the beta subunit then tranfers the carboxyl group from carboxylated biotin to propionyl-CoA. This chain is Propionyl-CoA carboxylase alpha chain, found in Ruegeria pomeroyi (strain ATCC 700808 / DSM 15171 / DSS-3) (Silicibacter pomeroyi).